A 403-amino-acid chain; its full sequence is Phosphopentomutase (403 aa).

Mn(2+)-binding residues include aspartate 13, aspartate 298, histidine 303, aspartate 339, histidine 340, and histidine 351.

This sequence belongs to the phosphopentomutase family. It depends on Mn(2+) as a cofactor.

It is found in the cytoplasm. The catalysed reaction is 2-deoxy-alpha-D-ribose 1-phosphate = 2-deoxy-D-ribose 5-phosphate. It catalyses the reaction alpha-D-ribose 1-phosphate = D-ribose 5-phosphate. The protein operates within carbohydrate degradation; 2-deoxy-D-ribose 1-phosphate degradation; D-glyceraldehyde 3-phosphate and acetaldehyde from 2-deoxy-alpha-D-ribose 1-phosphate: step 1/2. Isomerase that catalyzes the conversion of deoxy-ribose 1-phosphate (dRib-1-P) and ribose 1-phosphate (Rib-1-P) to deoxy-ribose 5-phosphate (dRib-5-P) and ribose 5-phosphate (Rib-5-P), respectively. This Streptococcus pyogenes serotype M2 (strain MGAS10270) protein is Phosphopentomutase.